The following is a 1098-amino-acid chain: Ubiquitin carboxyl-terminal hydrolase 36 (1098 aa).

Basic and acidic residues predominate over residues Arg-72–Thr-86. The interval Arg-72–Val-97 is disordered. Residues Ala-122–Ile-423 form the USP domain. Residue Cys-131 is the Nucleophile of the active site. The active-site Proton acceptor is His-382. Disordered stretches follow at residues Lys-428–Pro-464 and Glu-483–Ile-574. A phosphoserine mark is found at Ser-429, Ser-463, Ser-547, and Ser-578. Residues Pro-540–Gly-558 are compositionally biased toward low complexity. Positions Gly-589–Asn-640 are disordered. The segment covering Ser-606–Ser-617 has biased composition (low complexity). Ser-663 carries the phosphoserine modification. 2 disordered regions span residues Pro-664–Ala-710 and His-722–Val-973. The span at Ala-665–Met-677 shows a compositional bias: polar residues. The residue at position 678 (Ser-678) is a Phosphoserine. Positions Lys-683–Ala-692 are enriched in low complexity. Ser-709 is subject to Phosphoserine. Residues His-746–Ser-763 are compositionally biased toward low complexity. Residues Gly-853 to Gln-878 are compositionally biased toward polar residues. Basic residues predominate over residues Ser-889–Arg-898. The segment covering Gly-901–Cys-917 has biased composition (polar residues). Basic and acidic residues predominate over residues Asp-921 to Gln-932. Residues Lys-933–Lys-943 show a composition bias toward basic residues. Over residues Pro-944–Ser-960 the composition is skewed to basic and acidic residues.

It belongs to the peptidase C19 family. Interacts with isoform 3 of FBXW7; the interaction inhibits MYC degradation induced by SCF(FBW7) complex. Interacts with NTRK1; USP36 does not deubiquitinate NTRK1. Interacts with NEDD4L (via domains WW1, 3 and 4); the interaction inhibits ubiquitination of, at least, NTRK1, KCNQ2 and KCNQ3 by NEDD4L. Interacts (via C-terminus) with EXOSC10 (via C-terminus); the interaction is facilitated by the association with RNA and promotes sumoylation of EXOSC10. Polyubiquitinated by NEDD4L, no effect on USP36 protein levels. Both proteins interact with and regulate each other's ubiquitination levels.

Its subcellular location is the nucleus. The protein resides in the nucleolus. The protein localises to the cytoplasm. It catalyses the reaction Thiol-dependent hydrolysis of ester, thioester, amide, peptide and isopeptide bonds formed by the C-terminal Gly of ubiquitin (a 76-residue protein attached to proteins as an intracellular targeting signal).. Its function is as follows. Deubiquitinase essential for the regulation of nucleolar structure and function. Required for cell and organism viability. Plays an important role in ribosomal RNA processing and protein synthesis, which is mediated, at least in part, through deubiquitination of DHX33, NPM1 and FBL, regulating their protein stability. Functions as a transcriptional repressor by deubiquiting histone H2B at the promoters of genes critical for cellular differentiation, such as CDKN1A, thereby preventing histone H3 'Lys-4' trimethylation (H3K4). Specifically deubiquitinates MYC in the nucleolus, leading to prevent MYC degradation by the proteasome: acts by specifically interacting with isoform 3 of FBXW7 (FBW7gamma) in the nucleolus and counteracting ubiquitination of MYC by the SCF(FBW7) complex. In contrast, it does not interact with isoform 1 of FBXW7 (FBW7alpha) in the nucleoplasm. Interacts to and regulates the actions of E3 ubiquitin-protein ligase NEDD4L over substrates such as NTRK1, KCNQ2 and KCNQ3, affecting their expression an functions. Deubiquitinates SOD2, regulates SOD2 protein stability. Deubiquitinase activity is required to control selective autophagy activation by ubiquitinated proteins. Promotes CEP63 stabilization through 'Lys-48'-linked deubiquitination leading to increased stability. Acts as a SUMO ligase to promote EXOSC10 sumoylation critical for the nucleolar RNA exosome function in rRNA processing. Binds to pre-rRNAs. The chain is Ubiquitin carboxyl-terminal hydrolase 36 (Usp36) from Mus musculus (Mouse).